A 71-amino-acid polypeptide reads, in one-letter code: Prophage lysis protein S homolog EssD (71 aa).

This sequence belongs to the lambda phage S protein family.

This is Prophage lysis protein S homolog EssD (essD) from Escherichia coli (strain K12).